A 436-amino-acid polypeptide reads, in one-letter code: Fibrinogen gamma chain (436 aa).

An N-terminal signal peptide occupies residues 1–25 (MSWSLQPPSFLLCCLLLLFSPTGLA). A glycan (N-linked (GlcNAc...) asparagine) is linked at Asn-77. The region spanning 169–415 (QIHDTTGKDC…ETTMKIIPFN (247 aa)) is the Fibrinogen C-terminal domain. The cysteines at positions 178 and 207 are disulfide-linked. Residues Asp-343, Asp-345, and Gly-349 each coordinate Ca(2+). Cysteines 351 and 364 form a disulfide. Gln-423 is covalently cross-linked (Isoglutamyl lysine isopeptide (Gln-Lys) (interchain with K-431)). Ser-430 carries the phosphoserine modification. Lys-431 is covalently cross-linked (Isoglutamyl lysine isopeptide (Lys-Gln) (interchain with Q-423)).

In terms of assembly, heterohexamer; disulfide linked. Contains 2 sets of 3 non-identical chains (alpha, beta and gamma). The 2 heterotrimers are in head to head conformation with the N-termini in a small central domain. Conversion of fibrinogen to fibrin is triggered by thrombin, which cleaves fibrinopeptides A and B from alpha and beta chains, and thus exposes the N-terminal polymerization sites responsible for the formation of the soft clot. The soft clot is converted into the hard clot by factor XIIIA which catalyzes the epsilon-(gamma-glutamyl)lysine cross-linking between gamma chains (stronger) and between alpha chains (weaker) of different monomers.

It is found in the secreted. In terms of biological role, together with fibrinogen alpha (FGA) and fibrinogen beta (FGB), polymerizes to form an insoluble fibrin matrix. Fibrin has a major function in hemostasis as one of the primary components of blood clots. In addition, functions during the early stages of wound repair to stabilize the lesion and guide cell migration during re-epithelialization. Was originally thought to be essential for platelet aggregation, based on in vitro studies using anticoagulated blood. However, subsequent studies have shown that it is not absolutely required for thrombus formation in vivo. Enhances expression of SELP in activated platelets via an ITGB3-dependent pathway. Maternal fibrinogen is essential for successful pregnancy. Fibrin deposition is also associated with infection, where it protects against IFNG-mediated hemorrhage. May also facilitate the immune response via both innate and T-cell mediated pathways. In Mus musculus (Mouse), this protein is Fibrinogen gamma chain (Fgg).